The following is a 119-amino-acid chain: Large ribosomal subunit protein bL20 (119 aa).

Belongs to the bacterial ribosomal protein bL20 family.

Its function is as follows. Binds directly to 23S ribosomal RNA and is necessary for the in vitro assembly process of the 50S ribosomal subunit. It is not involved in the protein synthesizing functions of that subunit. The sequence is that of Large ribosomal subunit protein bL20 from Shewanella frigidimarina (strain NCIMB 400).